We begin with the raw amino-acid sequence, 338 residues long: Glycerol-3-phosphate dehydrogenase [NAD(P)+] (338 aa).

Residues Ser13, Trp14, and Lys108 each coordinate NADPH. The sn-glycerol 3-phosphate site is built by Lys108, Gly139, and Ser141. Ala143 contributes to the NADPH binding site. Sn-glycerol 3-phosphate is bound by residues Lys194, Asp247, Ser257, Arg258, and Asn259. Lys194 functions as the Proton acceptor in the catalytic mechanism. An NADPH-binding site is contributed by Arg258. NADPH-binding residues include Val282 and Glu284.

This sequence belongs to the NAD-dependent glycerol-3-phosphate dehydrogenase family.

The protein localises to the cytoplasm. The enzyme catalyses sn-glycerol 3-phosphate + NAD(+) = dihydroxyacetone phosphate + NADH + H(+). It catalyses the reaction sn-glycerol 3-phosphate + NADP(+) = dihydroxyacetone phosphate + NADPH + H(+). It participates in membrane lipid metabolism; glycerophospholipid metabolism. In terms of biological role, catalyzes the reduction of the glycolytic intermediate dihydroxyacetone phosphate (DHAP) to sn-glycerol 3-phosphate (G3P), the key precursor for phospholipid synthesis. In Streptococcus pyogenes serotype M12 (strain MGAS9429), this protein is Glycerol-3-phosphate dehydrogenase [NAD(P)+].